Consider the following 256-residue polypeptide: Trypsin epsilon (256 aa).

Positions 1-22 (MLKIAVLLSVLACALAGTIPDG) are cleaved as a signal peptide. The propeptide at 23–30 (LLPQLDGR) is activation peptide. The region spanning 31–254 (IVGGYETSID…FHEWIERTAR (224 aa)) is the Peptidase S1 domain. A disulfide bond links Cys-56 and Cys-72. Residues His-71 and Asp-116 each act as charge relay system in the active site. Intrachain disulfides connect Cys-180–Cys-197 and Cys-206–Cys-230. Catalysis depends on Ser-210, which acts as the Charge relay system.

The protein belongs to the peptidase S1 family.

The protein localises to the secreted. It is found in the extracellular space. It catalyses the reaction Preferential cleavage: Arg-|-Xaa, Lys-|-Xaa.. The protein is Trypsin epsilon (epsilonTry) of Drosophila erecta (Fruit fly).